We begin with the raw amino-acid sequence, 416 residues long: Cytochrome P450 monooxygenase PikC (416 aa).

Substrate contacts are provided by residues E94, 187 to 191 (AQTAM), and 238 to 246 (HILLVAGHE). C354 provides a ligand contact to heme.

The protein belongs to the cytochrome P450 family. Requires heme as cofactor.

It catalyses the reaction narbomycin + 2 reduced [2Fe-2S]-[ferredoxin] + O2 + 2 H(+) = pikromycin + 2 oxidized [2Fe-2S]-[ferredoxin] + H2O. The catalysed reaction is narbomycin + 2 reduced [2Fe-2S]-[ferredoxin] + O2 + 2 H(+) = neopikromycin + 2 oxidized [2Fe-2S]-[ferredoxin] + H2O. It carries out the reaction narbomycin + 4 reduced [2Fe-2S]-[ferredoxin] + 2 O2 + 4 H(+) = novapikromycin + 4 oxidized [2Fe-2S]-[ferredoxin] + 2 H2O. The enzyme catalyses 10-deoxymethymycin + 2 reduced [2Fe-2S]-[ferredoxin] + O2 + 2 H(+) = methymycin + 2 oxidized [2Fe-2S]-[ferredoxin] + H2O. It catalyses the reaction 10-deoxymethymycin + 2 reduced [2Fe-2S]-[ferredoxin] + O2 + 2 H(+) = neomethymycin + 2 oxidized [2Fe-2S]-[ferredoxin] + H2O. The catalysed reaction is 10-deoxymethymycin + 4 reduced [2Fe-2S]-[ferredoxin] + 2 O2 + 4 H(+) = novamethymycin + 4 oxidized [2Fe-2S]-[ferredoxin] + 2 H2O. Its pathway is antibiotic biosynthesis. Catalyzes the hydroxylation of narbomycin to give rise to pikromycin, and of 10-deoxymethymycin (YC-17) to give rise to methymycin and neomethymycin during macrolide antibiotic biosynthesis. In addition, produces low amounts of neopicromycin, novapikromycin and novamethymycin. Requires the participation of a ferredoxin and a ferredoxin reductase for the transfer of electrons from NADPH to the monooxygenase. The protein is Cytochrome P450 monooxygenase PikC of Streptomyces venezuelae.